The chain runs to 37 residues: MKIRASVRKICEKCRLIRRRGRIIVICSNPRHKQRQG.

It belongs to the bacterial ribosomal protein bL36 family.

The protein resides in the plastid. It is found in the chloroplast. This is Large ribosomal subunit protein bL36c from Lepidium virginicum (Virginia pepperweed).